We begin with the raw amino-acid sequence, 385 residues long: Succinate--CoA ligase [ADP-forming] subunit beta (385 aa).

The ATP-grasp domain maps to 9 to 244 (KEVLRKYGVS…LDEEDPKEIE (236 aa)). ATP is bound by residues Lys46, 53-55 (GRG), Glu99, Cys102, and Glu107. Mg(2+) is bound by residues Asn199 and Asp213. A Phosphoserine modification is found at Ser220. Substrate contacts are provided by residues Asn264 and 321 to 323 (GIM).

The protein belongs to the succinate/malate CoA ligase beta subunit family. Heterotetramer of two alpha and two beta subunits. Interacts with BrxC. Requires Mg(2+) as cofactor.

The enzyme catalyses succinate + ATP + CoA = succinyl-CoA + ADP + phosphate. The catalysed reaction is GTP + succinate + CoA = succinyl-CoA + GDP + phosphate. Its pathway is carbohydrate metabolism; tricarboxylic acid cycle; succinate from succinyl-CoA (ligase route): step 1/1. Its function is as follows. Succinyl-CoA synthetase functions in the citric acid cycle (TCA), coupling the hydrolysis of succinyl-CoA to the synthesis of either ATP or GTP and thus represents the only step of substrate-level phosphorylation in the TCA. The beta subunit provides nucleotide specificity of the enzyme and binds the substrate succinate, while the binding sites for coenzyme A and phosphate are found in the alpha subunit. In Bacillus subtilis (strain 168), this protein is Succinate--CoA ligase [ADP-forming] subunit beta.